Consider the following 463-residue polypeptide: Cysteine--tRNA ligase (463 aa).

C29 contacts Zn(2+). The short motif at 31 to 41 (PTVYDFAHIGN) is the 'HIGH' region element. Zn(2+) is bound by residues C227, H252, and E256. A 'KMSKS' region motif is present at residues 285–289 (KMSKS). Residue K288 participates in ATP binding.

Belongs to the class-I aminoacyl-tRNA synthetase family. In terms of assembly, monomer. It depends on Zn(2+) as a cofactor.

The protein localises to the cytoplasm. The enzyme catalyses tRNA(Cys) + L-cysteine + ATP = L-cysteinyl-tRNA(Cys) + AMP + diphosphate. This chain is Cysteine--tRNA ligase, found in Rhodopseudomonas palustris (strain BisB5).